A 92-amino-acid chain; its full sequence is Small ribosomal subunit protein uS19 (92 aa).

The protein belongs to the universal ribosomal protein uS19 family.

Protein S19 forms a complex with S13 that binds strongly to the 16S ribosomal RNA. In Shewanella halifaxensis (strain HAW-EB4), this protein is Small ribosomal subunit protein uS19.